The sequence spans 178 residues: Sec-independent protein translocase protein TatB (178 aa).

The chain crosses the membrane as a helical span at residues 2–22 (LPEIGAAELLIIAAVALIVVG). The disordered stretch occupies residues 104-178 (HSPTGYENTV…KARKTAGSAE (75 aa)). Over residues 114-131 (EPPPPEPEPQPAAEPAPK) the composition is skewed to pro residues. The segment covering 141 to 154 (PKAAAAPKAAAKPK) has biased composition (low complexity).

It belongs to the TatB family. In terms of assembly, the Tat system comprises two distinct complexes: a TatABC complex, containing multiple copies of TatA, TatB and TatC subunits, and a separate TatA complex, containing only TatA subunits. Substrates initially bind to the TatABC complex, which probably triggers association of the separate TatA complex to form the active translocon.

The protein resides in the cell inner membrane. Functionally, part of the twin-arginine translocation (Tat) system that transports large folded proteins containing a characteristic twin-arginine motif in their signal peptide across membranes. Together with TatC, TatB is part of a receptor directly interacting with Tat signal peptides. TatB may form an oligomeric binding site that transiently accommodates folded Tat precursor proteins before their translocation. In Phenylobacterium zucineum (strain HLK1), this protein is Sec-independent protein translocase protein TatB.